The chain runs to 497 residues: 4,4'-diaponeurosporene oxygenase (497 aa).

7–19 (VIGGGLGGISAAI) is an FAD binding site.

This sequence belongs to the carotenoid/retinoid oxidoreductase family. CrtP subfamily. It depends on FAD as a cofactor.

The enzyme catalyses all-trans-4,4'-diaponeurosporene + 2 AH2 + 2 O2 = 4,4'-diaponeurosporenal + 2 A + 3 H2O. Its pathway is carotenoid biosynthesis; staphyloxanthin biosynthesis; staphyloxanthin from farnesyl diphosphate: step 3/5. Its function is as follows. Involved in the biosynthesis of the yellow-orange carotenoid staphyloxanthin, which plays a role in the virulence via its protective function against oxidative stress. Catalyzes the oxidation of the terminal methyl side group of 4,4'-diaponeurosporene to form 4,4'-diaponeurosporen-4-al. This Staphylococcus aureus (strain MRSA252) protein is 4,4'-diaponeurosporene oxygenase.